The following is a 372-amino-acid chain: Ca(2+)/H(+) antiporter (372 aa).

11 consecutive transmembrane segments (helical) span residues 7 to 27 (IFLVLLVFCPLSFAAHWLGWG), 29 to 49 (TTVFILAGLAIVPLAAFMGTA), 62 to 82 (GGLLNATFGNATELILAYIAL), 94 to 114 (LTGSIIGNLLLVMGFAVFLGG), 134 to 154 (MNLGVVAILLPTALQYTSTGV), 162 to 182 (LSVAVAVVLIGVYLLSLVFSM), 222 to 242 (LWTGVLLVVTLGVAVESELLV), 251 to 271 (SLGLTALFTGVIVLPIIGNAA), 294 to 314 (GSSLQIAFFVAPVLVIVGWAI), 320 to 340 (LNFNPFELVAVLVAVLIVNSI), and 352 to 372 (ILLLATYAIVALAFFFHPTLV).

This sequence belongs to the Ca(2+):cation antiporter (CaCA) (TC 2.A.19) family. Cation/proton exchanger (CAX) subfamily.

The protein localises to the cell inner membrane. Ca(+)/H(+) antiporter that extrudes calcium in exchange for external protons. Plays an important role in salt tolerance. Does not transport sodium or lithium. In Synechocystis sp. (strain ATCC 27184 / PCC 6803 / Kazusa), this protein is Ca(2+)/H(+) antiporter.